A 174-amino-acid polypeptide reads, in one-letter code: Transcription antitermination protein NusB (174 aa).

The protein belongs to the NusB family.

Involved in transcription antitermination. Required for transcription of ribosomal RNA (rRNA) genes. Binds specifically to the boxA antiterminator sequence of the ribosomal RNA (rrn) operons. The protein is Transcription antitermination protein NusB of Rhodopseudomonas palustris (strain TIE-1).